Consider the following 173-residue polypeptide: Putative metal-dependent hydrolase BCE33L2441 (173 aa).

Zn(2+)-binding residues include histidine 65, histidine 156, and histidine 160.

It belongs to the metal hydrolase YfiT family. As to quaternary structure, homodimer. It depends on Zn(2+) as a cofactor.

It localises to the cytoplasm. Its function is as follows. Possible metal-dependent hydrolase. In Bacillus cereus (strain ZK / E33L), this protein is Putative metal-dependent hydrolase BCE33L2441.